We begin with the raw amino-acid sequence, 292 residues long: Porphobilinogen deaminase (292 aa).

Residue Cys235 is modified to S-(dipyrrolylmethanemethyl)cysteine.

It belongs to the HMBS family. As to quaternary structure, monomer. Dipyrromethane is required as a cofactor.

It carries out the reaction 4 porphobilinogen + H2O = hydroxymethylbilane + 4 NH4(+). The protein operates within porphyrin-containing compound metabolism; protoporphyrin-IX biosynthesis; coproporphyrinogen-III from 5-aminolevulinate: step 2/4. Tetrapolymerization of the monopyrrole PBG into the hydroxymethylbilane pre-uroporphyrinogen in several discrete steps. The sequence is that of Porphobilinogen deaminase from Acetivibrio thermocellus (strain ATCC 27405 / DSM 1237 / JCM 9322 / NBRC 103400 / NCIMB 10682 / NRRL B-4536 / VPI 7372) (Clostridium thermocellum).